We begin with the raw amino-acid sequence, 842 residues long: Glycogen phosphorylase, muscle form (842 aa).

Serine 2 is modified (N-acetylserine). The residue at position 15 (serine 15) is a Phosphoserine; by PHK; in form phosphorylase A. AMP is bound by residues aspartate 43 and tyrosine 76. Phosphotyrosine is present on residues tyrosine 204 and tyrosine 227. Arginine 310–cysteine 319 provides a ligand contact to AMP. A Phosphoserine modification is found at serine 430. Tyrosine 473 is modified (phosphotyrosine). Serine 514 is subject to Phosphoserine. Lysine 681 is subject to N6-(pyridoxal phosphate)lysine. Phosphoserine occurs at positions 747 and 748.

Belongs to the glycogen phosphorylase family. Homodimer. Homotetramer; to form the enzymatically active phosphorylase A. Pyridoxal 5'-phosphate is required as a cofactor. Post-translationally, phosphorylation of Ser-15 converts phosphorylase B (unphosphorylated) to phosphorylase A.

The catalysed reaction is [(1-&gt;4)-alpha-D-glucosyl](n) + phosphate = [(1-&gt;4)-alpha-D-glucosyl](n-1) + alpha-D-glucose 1-phosphate. Allosterically regulated through the non-covalent binding of metabolites, being activated by AMP and inhibited by ATP, ADP, and glucose-6-phosphate. The activity is also controlled by post-translational modifications including phosphorylation. In terms of biological role, allosteric enzyme that catalyzes the rate-limiting step in glycogen catabolism, the phosphorolytic cleavage of glycogen to produce glucose-1-phosphate, and plays a central role in maintaining cellular and organismal glucose homeostasis. The sequence is that of Glycogen phosphorylase, muscle form from Homo sapiens (Human).